A 778-amino-acid chain; its full sequence is GRIP and coiled-coil domain-containing protein 1 (778 aa).

Positions 13 to 61 (SKKDLLETIETQKKQLLQYQARLKDVVRAYKSLLKEKEALEASIKVLSV) form a coiled coil. Disordered regions lie at residues 70–157 (SGVQ…MDKR), 186–208 (YLADKKKMKQDLEDANKKAEEER), and 617–638 (GRRSPVGGVGGGGLGDPADTAS). Residues 83–93 (VDDRCSTHSED) are compositionally biased toward basic and acidic residues. Composition is skewed to low complexity over residues 94–109 (STGTATSLDTAASLTS) and 133–152 (ASGSESGVSSSSGDGPSAGS). A coiled-coil region spans residues 152-702 (SEMDKRVHQL…EEGERHREEV (551 aa)). Residues 716 to 766 (QSREGANLEYLKNIIYRFLTLPDSLGRQQTLTAILTILHFSPEEKQVLMRL) enclose the GRIP domain.

The protein localises to the cytoplasm. The protein resides in the golgi apparatus membrane. In terms of biological role, probably involved in maintaining Golgi structure. This chain is GRIP and coiled-coil domain-containing protein 1 (Gcc1), found in Mus musculus (Mouse).